The primary structure comprises 476 residues: ATP synthase subunit beta, chloroplastic (476 aa).

ATP is bound at residue 155–162; it reads GGAGVGKT.

It belongs to the ATPase alpha/beta chains family. As to quaternary structure, F-type ATPases have 2 components, CF(1) - the catalytic core - and CF(0) - the membrane proton channel. CF(1) has five subunits: alpha(3), beta(3), gamma(1), delta(1), epsilon(1). CF(0) has four main subunits: a(1), b(1), b'(1) and c(9-12).

Its subcellular location is the plastid. It localises to the chloroplast thylakoid membrane. The enzyme catalyses ATP + H2O + 4 H(+)(in) = ADP + phosphate + 5 H(+)(out). Functionally, produces ATP from ADP in the presence of a proton gradient across the membrane. The catalytic sites are hosted primarily by the beta subunits. The chain is ATP synthase subunit beta, chloroplastic from Emiliania huxleyi (Coccolithophore).